A 197-amino-acid chain; its full sequence is Segregation and condensation protein B (197 aa).

It belongs to the ScpB family. As to quaternary structure, homodimer. Homodimerization may be required to stabilize the binding of ScpA to the Smc head domains. Component of a cohesin-like complex composed of ScpA, ScpB and the Smc homodimer, in which ScpA and ScpB bind to the head domain of Smc. The presence of the three proteins is required for the association of the complex with DNA.

The protein resides in the cytoplasm. Participates in chromosomal partition during cell division. May act via the formation of a condensin-like complex containing Smc and ScpA that pull DNA away from mid-cell into both cell halves. The protein is Segregation and condensation protein B of Malacoplasma penetrans (strain HF-2) (Mycoplasma penetrans).